The sequence spans 1199 residues: MASAGTQHYSIGLRQKNSFKQSGPSGTVPATPPEKPSEGRVWPQAHQQVKPIWKLEKKQVETLSAGLGPGLLGVPPQPAYFFCPSTLCSSGTTAVIAGHSSSCYLHSLPDLFNSTLLYRRSSYRQKPYQQLESFCLRSSPSEKSPFSLPQKSLPVSLTANKATSSMVFSMAQPMASSSTEPYLCLAAAGENPSGKSLASAISGKIPSPLSSSYKPMLNNNSFMWPNSTPVPLLQTTQGLKPVSPPKIQPVSWHHSGGTGDCAPQPVDHKVPKSIGTVPADASAHIALSTASSHDTSTTSVASSWYNRNNLAMRAEPLSCALDDSSDSQDPTKEIRFTEAVRKLTARGFEKMPRQGCQLEQSSFLNPSFQWNVLNRSRRWKPPAVNQQFPQEDAGSVRRVLPGASDTLGLDNTVFCTKRISIHLLASHASGLNHNPACESVIDSSAFGEGKAPGPPFPQTLGIANVATRLSSIQLGQSEKERPEEARELDSSDRDISSATDLQPDQAETEDTEEELVDGLEDCCSRDENEEEEGDSECSSLSAVSPSESVAMISRSCMEILTKPLSNHEKVVRPALIYSLFPNVPPTIYFGTRDERVEKLPWEQRKLLRWKMSTVTPNIVKQTIGRSHFKISKRNDDWLGCWGHHMKSPSFRSIREHQKLNHFPGSFQIGRKDRLWRNLSRMQSRFGKKEFSFFPQSFILPQDAKLLRKAWESSSRQKWIVKPPASARGIGIQVIHKWSQLPKRRPLLVQRYLHKPYLISGSKFDLRIYVYVTSYDPLRIYLFSDGLVRFASCKYSPSMKSLGNKFMHLTNYSVNKKNAEYQANADEMACQGHKWALKALWNYLSQKGVNSDAIWEKIKDVVVKTIISSEPYVTSLLKMYVRRPYSCHELFGFDIMLDENLKPWVLEVNISPSLHSSSPLDISIKGQMIRDLLNLAGFVLPNAEDIISSPSSCSSSTTSLPTSPGDKCRMAPEHVTAQKMKKAYYLTQKIPDQDFYASVLDVLTPDDVRILVEMEDEFSRRGQFERIFPSHISSRYLRFFEQPRYFNILTTQWEQKYHGNKLKGVDLLRSWCYKGFHMGVVSDSAPVWSLPTSLLTISKDDVILNAFSKSETSKLGKQSSCEVSLLLSEDGTTPKSKKTQAGLSPYPQKPSSSKDSEDTSKEPSLSTQTLPVIKCSGQTSRLSASSTFQSISDSLLAVSP.

Residues 1-25 show a composition bias toward polar residues; the sequence is MASAGTQHYSIGLRQKNSFKQSGPS. 3 disordered regions span residues 1 to 43, 472 to 517, and 525 to 544; these read MASA…RVWP, IQLG…ELVD, and RDENEEEEGDSECSSLSAVS. Basic and acidic residues predominate over residues 477–495; the sequence is SEKERPEEARELDSSDRDI. The span at 506-517 shows a compositional bias: acidic residues; sequence AETEDTEEELVD. One can recognise a TTL domain in the interval 604 to 947; the sequence is RKLLRWKMST…VLPNAEDIIS (344 aa). Phosphoserine is present on Ser-691. ATP contacts are provided by residues Lys-721, 727–728, 749–752, and 762–764; these read RG, QRYL, and KFD. Arg-727 contacts a protein. Arg-788 contacts L-glutamate. Residue 809–810 participates in ATP binding; the sequence is TN. Residues Tyr-811, Ser-812, and Lys-833 each coordinate L-glutamate. Residues Asp-893, Glu-906, and Asn-908 each contribute to the Mg(2+) site. Residues 918-1029 are c-MTBD region; the sequence is PLDISIKGQM…RGQFERIFPS (112 aa). Residue Lys-924 coordinates L-glutamate. Polar residues predominate over residues 1130 to 1141; that stretch reads GTTPKSKKTQAG. A disordered region spans residues 1130 to 1199; sequence GTTPKSKKTQ…ISDSLLAVSP (70 aa). A compositionally biased stretch (basic and acidic residues) spans 1151–1160; that stretch reads SSKDSEDTSK. Polar residues predominate over residues 1164–1192; sequence LSTQTLPVIKCSGQTSRLSASSTFQSISD.

The protein belongs to the tubulin--tyrosine ligase family. It depends on Mg(2+) as a cofactor.

The protein localises to the cytoplasm. The protein resides in the cell projection. It localises to the cilium. Its subcellular location is the cytoskeleton. It is found in the cilium basal body. It carries out the reaction L-glutamyl-[protein] + L-glutamate + ATP = gamma-L-glutamyl-L-glutamyl-[protein] + ADP + phosphate + H(+). In terms of biological role, monoglutamylase which modifies both tubulin and non-tubulin proteins, adding a single glutamate on the gamma-carboxyl group of specific glutamate residues of target proteins. Involved in the side-chain initiation step of the polyglutamylation reaction but not in the elongation step. Preferentially modifies beta-tail tubulin over the alpha-tubulin. Monoglutamylates nucleosome assembly proteins NAP1L1 and NAP1L4. Monoglutamylates nucleotidyltransferase CGAS, leading to inhibition of CGAS catalytic activity, thereby preventing antiviral defense function. Involved in KLF4 glutamylation which impedes its ubiquitination, thereby leading to somatic cell reprogramming, pluripotency maintenance and embryogenesis. This is Tubulin monoglutamylase TTLL4 from Homo sapiens (Human).